We begin with the raw amino-acid sequence, 272 residues long: Lectin-like protein At1g53070 (272 aa).

The signal sequence occupies residues 1 to 23 (MKIQILCFTTLFLAIFTSQVTTA). A legume-lectin like region spans residues 24 to 271 (YKFKFDYFGN…RHEIWDWTFQ (248 aa)). Asn33, Asn84, and Asn134 each carry an N-linked (GlcNAc...) asparagine glycan. The residue at position 241 (Ser241) is a Phosphoserine.

It belongs to the leguminous lectin family.

The protein resides in the secreted. Its subcellular location is the extracellular space. It localises to the apoplast. This Arabidopsis thaliana (Mouse-ear cress) protein is Lectin-like protein At1g53070.